The primary structure comprises 426 residues: FK506-binding protein 3 (426 aa).

Disordered regions lie at residues 37-143 (SLDP…PKHQ) and 171-314 (TGNY…KKKK). Composition is skewed to acidic residues over residues 65–94 (DYFEDDDDDEEEDDEEDELDDEEEEEEAEE), 111–131 (EDEEEDDEEEDDEDNDEDDVS), and 181–225 (QDEE…SEEE). 3 stretches are compositionally biased toward basic and acidic residues: residues 226-257 (GTPKIEEIVEEKEKVKESPKESKKRVAEESTS), 264-278 (KKDEKKSVQFSKELE), and 287-311 (VEKDNKKATPTKDKKETPVKDDGDK). Residues 340 to 426 (GAKVGIRYIG…TFDIKLVSLK (87 aa)) form the PPIase FKBP-type domain.

It belongs to the FKBP-type PPIase family. FKBP3/4 subfamily.

The protein localises to the nucleus. It is found in the nucleolus. It catalyses the reaction [protein]-peptidylproline (omega=180) = [protein]-peptidylproline (omega=0). Inhibited by both FK506 and rapamycin. In terms of biological role, PPIases accelerate the folding of proteins. It catalyzes the cis-trans isomerization of proline imidic peptide bonds in oligopeptides. The sequence is that of FK506-binding protein 3 (FPR3) from Candida albicans (strain SC5314 / ATCC MYA-2876) (Yeast).